Reading from the N-terminus, the 583-residue chain is MAVTLVTSFASSSSRFHFRSFSSSPSSLSSCFVRFQFPSRLRLAFAVTPLYSSSRAMAHTISHATLGLTQANSVDHPKISFSGKEIDVTEWKGDILAVGVTEKDMAKDVNSKFENPILKKLDAHLGGLLADVSSEEDFSGKPGQSTVLRLPGLGSKRVGLIGLGKSASTPSAFQSLGEAVAAAAKASQASSVAVVLASSESVSNESKLCSASAIASGTVLGLFEDSRYKSESKKPSLKSVDIIGFGSGPELEKKLKYAEHVSYGVIFGKELVNSPANVLTPAVLAEEALNLASMYSDVMTANILNEEQCKELKMGSYLAVAAASANPPHFIHLIYKPSSGPVKTKLALVGKGLTFDSGGYNIKTGPGCLIELMKFDMGGSAAVLGAAKAIGQIKPPGVEVHFIVAACENMISGTGMRPGDVLTASNGKTIEVNNTDAEGRLTLADALVYACNQGVDKVVDLATLTGACIIALGTSMAGIYTPSDKLAKEVIAASERSGEKLWRMPMEESYWEMMKSGVADMVNTGGRAGGSITAALFLKQFVSEDVEWMHIDMAGPVWNEKKKAATGFGVATLVEWVQNHSSS.

A chloroplast-targeting transit peptide spans 1–70; that stretch reads MAVTLVTSFA…ISHATLGLTQ (70 aa). 2 residues coordinate Mn(2+): lysine 351 and aspartate 356. Lysine 363 is a catalytic residue. Positions 376, 436, and 438 each coordinate Mn(2+). Arginine 440 is a catalytic residue.

The protein belongs to the peptidase M17 family. As to quaternary structure, homohexamer (dimer of homotrimers). The cofactor is Mn(2+).

The protein resides in the plastid. It is found in the chloroplast. It catalyses the reaction Release of an N-terminal amino acid, Xaa-|-Yaa-, in which Xaa is preferably Leu, but may be other amino acids including Pro although not Arg or Lys, and Yaa may be Pro. Amino acid amides and methyl esters are also readily hydrolyzed, but rates on arylamides are exceedingly low.. It carries out the reaction Release of N-terminal proline from a peptide.. Functionally, presumably involved in the processing and regular turnover of intracellular proteins. Catalyzes the removal of unsubstituted N-terminal amino acids from various peptides. Possesses leucine aminopeptidase activity against the model substrate leucine-amido methyl coumarin. Does not seem to possess Cys-Gly dipeptidase activity. In terms of biological role, functions as a molecular chaperone to protect proteins from heat-induced damage. The polypeptide is Leucine aminopeptidase 2, chloroplastic (Arabidopsis thaliana (Mouse-ear cress)).